A 205-amino-acid chain; its full sequence is DUF724 domain-containing protein 4 (205 aa).

Residues 28 to 59 (DASGRGKRRRVEQEHHSDLNNETAAPTGGSAG) are disordered. One can recognise a DUF724 domain in the interval 63–189 (VLPFTKTLAS…MADDYSKLKK (127 aa)).

As to expression, expressed in roots, leaves, stems, flowers and siliques.

The protein localises to the nucleus. In terms of biological role, may be involved in the polar growth of plant cells via transportation of RNAs. In Arabidopsis thaliana (Mouse-ear cress), this protein is DUF724 domain-containing protein 4.